A 406-amino-acid polypeptide reads, in one-letter code: 2,3-bisphosphoglycerate-independent phosphoglycerate mutase (406 aa).

The span at 156 to 165 (ITEGDPHKEG) shows a compositional bias: basic and acidic residues. Residues 156–177 (ITEGDPHKEGVPIPEVKPLDNS) are disordered.

Belongs to the BPG-independent phosphoglycerate mutase family. A-PGAM subfamily.

It carries out the reaction (2R)-2-phosphoglycerate = (2R)-3-phosphoglycerate. It participates in carbohydrate degradation; glycolysis; pyruvate from D-glyceraldehyde 3-phosphate: step 3/5. Functionally, catalyzes the interconversion of 2-phosphoglycerate and 3-phosphoglycerate. This Methanococcus aeolicus (strain ATCC BAA-1280 / DSM 17508 / OCM 812 / Nankai-3) protein is 2,3-bisphosphoglycerate-independent phosphoglycerate mutase.